Consider the following 466-residue polypeptide: ATP synthase subunit beta (466 aa).

155-162 (GGAGVGKT) lines the ATP pocket.

Belongs to the ATPase alpha/beta chains family. As to quaternary structure, F-type ATPases have 2 components, CF(1) - the catalytic core - and CF(0) - the membrane proton channel. CF(1) has five subunits: alpha(3), beta(3), gamma(1), delta(1), epsilon(1). CF(0) has three main subunits: a(1), b(2) and c(9-12). The alpha and beta chains form an alternating ring which encloses part of the gamma chain. CF(1) is attached to CF(0) by a central stalk formed by the gamma and epsilon chains, while a peripheral stalk is formed by the delta and b chains.

It localises to the cell inner membrane. It carries out the reaction ATP + H2O + 4 H(+)(in) = ADP + phosphate + 5 H(+)(out). Functionally, produces ATP from ADP in the presence of a proton gradient across the membrane. The catalytic sites are hosted primarily by the beta subunits. The polypeptide is ATP synthase subunit beta (Bordetella avium (strain 197N)).